Reading from the N-terminus, the 188-residue chain is Accessory gene regulator protein B (188 aa).

4 consecutive transmembrane segments (helical) span residues 49-69 (VALI…YFLV), 100-122 (VYFQ…LIIY), 143-163 (LLSI…PEPF), and 164-184 (KQLI…IFFP).

This sequence belongs to the AgrB family.

The protein resides in the cell membrane. Its function is as follows. Essential for the production of a quorum sensing system signal molecule, the autoinducing peptide (AIP). This quorum sensing system is responsible for the regulation of the expression of virulence factor genes. Involved in the proteolytic processing of AgrD, the precursor of AIP. The polypeptide is Accessory gene regulator protein B (Staphylococcus haemolyticus (strain JCSC1435)).